The sequence spans 122 residues: Small ribosomal subunit protein uS12c (122 aa).

This sequence belongs to the universal ribosomal protein uS12 family. As to quaternary structure, part of the 30S ribosomal subunit.

It is found in the plastid. The protein resides in the chloroplast. With S4 and S5 plays an important role in translational accuracy. Located at the interface of the 30S and 50S subunits. This Chloranthus spicatus (Chulantree) protein is Small ribosomal subunit protein uS12c (rps12).